Consider the following 35-residue polypeptide: Photosystem II reaction center protein T (35 aa).

A helical membrane pass occupies residues 3–23 (ALVYTFLLVSTLGIIFFAIFF).

This sequence belongs to the PsbT family. In terms of assembly, PSII is composed of 1 copy each of membrane proteins PsbA, PsbB, PsbC, PsbD, PsbE, PsbF, PsbH, PsbI, PsbJ, PsbK, PsbL, PsbM, PsbT, PsbY, PsbZ, Psb30/Ycf12, at least 3 peripheral proteins of the oxygen-evolving complex and a large number of cofactors. It forms dimeric complexes.

The protein resides in the plastid. It is found in the chloroplast thylakoid membrane. In terms of biological role, found at the monomer-monomer interface of the photosystem II (PS II) dimer, plays a role in assembly and dimerization of PSII. PSII is a light-driven water plastoquinone oxidoreductase, using light energy to abstract electrons from H(2)O, generating a proton gradient subsequently used for ATP formation. This Gossypium barbadense (Sea Island cotton) protein is Photosystem II reaction center protein T.